Reading from the N-terminus, the 116-residue chain is Putative iron-sulfur cluster insertion protein ErpA (116 aa).

3 residues coordinate iron-sulfur cluster: Cys-44, Cys-108, and Cys-110.

It belongs to the HesB/IscA family. Homodimer. Requires iron-sulfur cluster as cofactor.

In terms of biological role, required for insertion of 4Fe-4S clusters. The chain is Putative iron-sulfur cluster insertion protein ErpA from Thiobacillus denitrificans (strain ATCC 25259 / T1).